A 279-amino-acid chain; its full sequence is Eukaryotic translation initiation factor 3 subunit G (279 aa).

Disordered regions lie at residues 1–26 (MSTG…IANP), 66–115 (RKNW…KAHE), and 152–171 (TPSG…AAGA). A Phosphoserine modification is found at Ser-78. Positions 102–115 (KQDEKKEEEDKAHE) are enriched in basic and acidic residues. Residues 152–163 (TPSGTTPEPTSE) show a composition bias toward low complexity. One can recognise an RRM domain in the interval 197 to 276 (TTLKVSQLNS…LILHLEWSKK (80 aa)).

It belongs to the eIF-3 subunit G family. Component of the eukaryotic translation initiation factor 3 (eIF-3) complex.

The protein localises to the cytoplasm. Functionally, RNA-binding component of the eukaryotic translation initiation factor 3 (eIF-3) complex, which is involved in protein synthesis of a specialized repertoire of mRNAs and, together with other initiation factors, stimulates binding of mRNA and methionyl-tRNAi to the 40S ribosome. The eIF-3 complex specifically targets and initiates translation of a subset of mRNAs involved in cell proliferation. This subunit can bind 18S rRNA. In Candida albicans (strain SC5314 / ATCC MYA-2876) (Yeast), this protein is Eukaryotic translation initiation factor 3 subunit G.